Reading from the N-terminus, the 281-residue chain is uncharacterized protein (281 aa).

Transmembrane regions (helical) follow at residues 23-45 (LLLSYIINLISSIIILIIGFFAA), 65-87 (IANFLAALVRYIIITFALIASLG), and 94-116 (TSVIAILGAAGMAIGLALQGSLS).

It belongs to the MscS (TC 1.A.23) family.

The protein localises to the cell membrane. This is an uncharacterized protein from Buchnera aphidicola subsp. Baizongia pistaciae (strain Bp).